A 166-amino-acid chain; its full sequence is MKWTALVIVAVLQTQFPVTAAQSFGLLDPKLCYLLDGILFIYGVIVTALFLRAKFSRSADAPAYQHGQNPVYNELNVGRREEYAVLDRRGGFDPEMGGKPQRKKNPHEVVYNELRKDKMAEAYSEIGMKSDNQRRRGKGHDGVYQGLSTATKDTYDALHMQALPPR.

The signal sequence occupies residues 1-21 (MKWTALVIVAVLQTQFPVTAA). At 22-30 (QSFGLLDPK) the chain is on the extracellular side. The chain crosses the membrane as a helical span at residues 31–51 (LCYLLDGILFIYGVIVTALFL). Over 52-166 (RAKFSRSADA…ALHMQALPPR (115 aa)) the chain is Cytoplasmic. Phosphoserine is present on S58. ITAM domains lie at 61–89 (APAY…LDRR), 100–128 (PQRK…EIGM), and 133–161 (QRRR…LHMQ). A phosphotyrosine mark is found at Y64, Y72, Y83, Y111, Y123, Y144, and Y155. Positions 126–156 (IGMKSDNQRRRGKGHDGVYQGLSTATKDTYD) are disordered.

It belongs to the CD3Z/FCER1G family. The TCR-CD3 complex is composed of a CD3D/CD3E and a CD3G/CD3E heterodimers that preferentially associate with TCRalpha and TCRbeta, respectively, to form TCRalpha/CD3E/CD3G and TCRbeta/CD3G/CD3E trimers. In turn, the hexamer interacts with CD3Z homodimer to form the TCR-CD3 complex. Alternatively, TCRalpha and TCRbeta can be replaced by TCRgamma and TCRdelta. Interacts with SLA. Interacts with TRAT1. Interacts with DOCK2. Interacts with SLA2. Interacts with SHB. Interacts with ZAP70. Interacts (tyrosine phosphorylated) with SHC1 (via SH2 domain). Interacts with PTPRC. Interacts with CRK; this interaction regulates CD3Z phosphorylation. Interacts (on T cell side) with CD81, ICAM1 and CD9 at immunological synapses between antigen-presenting cells and T cells. Interacts with CD160. Interacts with LY6E. Interacts with LY6E. The signaling subunit of immunoglobulin gamma (IgG) Fc receptor complex. As a homodimer or a heterodimer with FCER1G, associates with the ligand binding subunit FCGR3A (via transmembrane domain); this interaction is a prerequisite for Fc receptor complex expression on the cell surface. Interacts with CD5. Phosphorylated on Tyr residues after T-cell receptor triggering by LCK in association with CD4/CD8.

It is found in the cell membrane. In terms of biological role, part of the TCR-CD3 complex present on T-lymphocyte cell surface that plays an essential role in adaptive immune response. When antigen presenting cells (APCs) activate T-cell receptor (TCR), TCR-mediated signals are transmitted across the cell membrane by the CD3 chains CD3D, CD3E, CD3G and CD3Z. All CD3 chains contain immunoreceptor tyrosine-based activation motifs (ITAMs) in their cytoplasmic domain. Upon TCR engagement, these motifs become phosphorylated by Src family protein tyrosine kinases LCK and FYN, resulting in the activation of downstream signaling pathways. CD3Z ITAMs phosphorylation creates multiple docking sites for the protein kinase ZAP70 leading to ZAP70 phosphorylation and its conversion into a catalytically active enzyme. Plays an important role in intrathymic T-cell differentiation. Additionally, participates in the activity-dependent synapse formation of retinal ganglion cells (RGCs) in both the retina and dorsal lateral geniculate nucleus (dLGN). The protein is T-cell surface glycoprotein CD3 zeta chain (CD247) of Ovis aries (Sheep).